Reading from the N-terminus, the 258-residue chain is MTEAVQNVAQPQIEVENLNLWYGEKQALKNISMQIPKNSVTALIGPSGCGKSTFIRCLNRMNDLIKNCRIEGKVSIEDEDIYEKGVDVVELRKRVGMVFQKPNPFPMSIYDNIAYGPRIHGANKKDLGGIVEFALRSAALWNETSDRLKSTALSLSGGQQQRLCIARTLAVKPEIILFDEPCSALDPISTSRIEELIMNLKKDYTIVIVTHNMQQAARVSDYTGFFLMGELIEFGKTRQIFHNPKEQSTEDYITGRFG.

In terms of domain architecture, ABC transporter spans 13–253 (IEVENLNLWY…PKEQSTEDYI (241 aa)). 45-52 (GPSGCGKS) lines the ATP pocket.

This sequence belongs to the ABC transporter superfamily. Phosphate importer (TC 3.A.1.7) family. In terms of assembly, the complex is composed of two ATP-binding proteins (PstB), two transmembrane proteins (PstC and PstA) and a solute-binding protein (PstS).

The protein resides in the cell membrane. It carries out the reaction phosphate(out) + ATP + H2O = ADP + 2 phosphate(in) + H(+). In terms of biological role, part of the ABC transporter complex PstSACB involved in phosphate import. Responsible for energy coupling to the transport system. This chain is Phosphate import ATP-binding protein PstB, found in Methanosarcina acetivorans (strain ATCC 35395 / DSM 2834 / JCM 12185 / C2A).